A 489-amino-acid polypeptide reads, in one-letter code: Lysine--tRNA ligase (489 aa).

Residues E399 and E406 each coordinate Mg(2+).

This sequence belongs to the class-II aminoacyl-tRNA synthetase family. As to quaternary structure, homodimer. Requires Mg(2+) as cofactor.

It is found in the cytoplasm. It carries out the reaction tRNA(Lys) + L-lysine + ATP = L-lysyl-tRNA(Lys) + AMP + diphosphate. The polypeptide is Lysine--tRNA ligase (Roseiflexus castenholzii (strain DSM 13941 / HLO8)).